The chain runs to 183 residues: DELTA-miturgitoxin-Cp1b (183 aa).

The N-terminal stretch at 1 to 20 is a signal peptide; that stretch reads MKFSLFFSVFFLAVLHACLS. The propeptide occupies 21–47; it reads ESEIDLEDEEHFMSSDSFLSEIQDESR. The Processing quadruplet motif signature appears at 44–47; it reads DESR. 8 disulfide bridges follow: C51–C66, C58–C75, C65–C88, C77–C86, C115–C130, C122–C139, C129–C157, and C141–C155. The interval 164–177 is predicted alpha-helix; the sequence is QAIEGALRIAKKLI. The residue at position 181 (W181) is a Tryptophan amide.

The protein belongs to the neurotoxin 19 (CSTX) family. Double-CSTX subfamily. In terms of processing, cleavage of the propeptide depends on the processing quadruplet motif (XXXR, with at least one of X being E). As to expression, expressed by the venom gland.

It localises to the secreted. The protein localises to the target cell membrane. In terms of biological role, spider venom toxin that exhibits cytolytic activity by forming an alpha-helix across the membrane. Lethal to insect larvae. Causes instant paralysis and death in the larvae of the flesh fly (S.carnaria) at doses of 20 ug/g, at doses of less than 10 ug/g causes reversible paralysis. Has cytolytic activity against insect Sf9 cells. Causes stable and irreversible depolarization of fly muscle fibers, leading to contracture at higher toxin concentrations. Destabilizes membranes. The chain is DELTA-miturgitoxin-Cp1b from Cheiracanthium punctorium (Yellow sac spider).